The chain runs to 478 residues: MGSRLNPSSNMYIPMNGPRGGYYGMPSMGQLQHPLFNYQFPPGGFQHLQQQQQQQQQQQQQQQQQQQQQTQVQQLHNQLHQQHNQQIQQQAQATQQHLQTQQYLQSQIHQQSQQSQLSNNLNSNSKESTNIPKTNTQYTNFDSKNLDLASRYFSECSTKDFIGNKKKSTSVAWNANGTKIASSGSDGIVRVWNFDPLGNSNNNNNSNNTSSNSKNNNIKETIELKGHDGSIEKISWSPKNNDLLASAGTDKVIKIWDVKIGKCIGTVSTNSENIDVRWSPDGQFIVACTRDDHLALIDLPTIKTLKIYKFNGEELNQVGWDNNGDLILMANSMGNIEAYKFLPKSTTHVKHLKTLYGHTASIYCMEFDPTGKYLAAGSADSIVSLWDIEDMMCVKTFIKSTFPCRSVSFSFDGQFIAASSFESTIEIFHIESSQPIHTIECSGVSSLMWHPTLPLLAYAPEINENNKDPSIRVFGYHS.

Disordered stretches follow at residues 33-53 and 106-140; these read HPLF…QQQQ and SQIH…QYTN. Over residues 106 to 125 the composition is skewed to low complexity; the sequence is SQIHQQSQQSQLSNNLNSNS. Over residues 126–140 the composition is skewed to polar residues; the sequence is KESTNIPKTNTQYTN. WD repeat units follow at residues 163–202, 226–268, 270–307, 310–349, 357–396, 399–438, and 440–478; these read GNKK…NSNN, GHDG…GTVS, NSEN…TLKI, FNGE…TTHV, GHTA…CVKT, KSTF…PIHT, and ECSG…GYHS.

Belongs to the THOC3 family.

This is WD repeat-containing protein AAC3 (AAC3) from Dictyostelium discoideum (Social amoeba).